Consider the following 452-residue polypeptide: Bifunctional protein GlmU (452 aa).

The segment at 1–226 (MNFSAVILAA…PIEVEGVNDR (226 aa)) is pyrophosphorylase. Residues 8–11 (LAAG), lysine 22, glutamine 73, 78–79 (GT), 100–102 (YGD), glycine 137, glutamate 151, asparagine 166, and asparagine 224 contribute to the UDP-N-acetyl-alpha-D-glucosamine site. A Mg(2+)-binding site is contributed by aspartate 102. Asparagine 224 provides a ligand contact to Mg(2+). The tract at residues 227–247 (AQLARLERAYQAAQAQKLLEQ) is linker. An N-acetyltransferase region spans residues 248–452 (GVMLRDPSRF…IANWQRPTKK (205 aa)). UDP-N-acetyl-alpha-D-glucosamine is bound by residues arginine 330 and lysine 348. Histidine 360 (proton acceptor) is an active-site residue. UDP-N-acetyl-alpha-D-glucosamine contacts are provided by tyrosine 363 and asparagine 374. Acetyl-CoA-binding positions include alanine 377, 383–384 (NY), serine 402, alanine 420, and arginine 437.

In the N-terminal section; belongs to the N-acetylglucosamine-1-phosphate uridyltransferase family. The protein in the C-terminal section; belongs to the transferase hexapeptide repeat family. In terms of assembly, homotrimer. Mg(2+) is required as a cofactor.

The protein resides in the cytoplasm. The enzyme catalyses alpha-D-glucosamine 1-phosphate + acetyl-CoA = N-acetyl-alpha-D-glucosamine 1-phosphate + CoA + H(+). It carries out the reaction N-acetyl-alpha-D-glucosamine 1-phosphate + UTP + H(+) = UDP-N-acetyl-alpha-D-glucosamine + diphosphate. It participates in nucleotide-sugar biosynthesis; UDP-N-acetyl-alpha-D-glucosamine biosynthesis; N-acetyl-alpha-D-glucosamine 1-phosphate from alpha-D-glucosamine 6-phosphate (route II): step 2/2. The protein operates within nucleotide-sugar biosynthesis; UDP-N-acetyl-alpha-D-glucosamine biosynthesis; UDP-N-acetyl-alpha-D-glucosamine from N-acetyl-alpha-D-glucosamine 1-phosphate: step 1/1. It functions in the pathway bacterial outer membrane biogenesis; LPS lipid A biosynthesis. Catalyzes the last two sequential reactions in the de novo biosynthetic pathway for UDP-N-acetylglucosamine (UDP-GlcNAc). The C-terminal domain catalyzes the transfer of acetyl group from acetyl coenzyme A to glucosamine-1-phosphate (GlcN-1-P) to produce N-acetylglucosamine-1-phosphate (GlcNAc-1-P), which is converted into UDP-GlcNAc by the transfer of uridine 5-monophosphate (from uridine 5-triphosphate), a reaction catalyzed by the N-terminal domain. This Aliivibrio fischeri (strain ATCC 700601 / ES114) (Vibrio fischeri) protein is Bifunctional protein GlmU.